The primary structure comprises 305 residues: tRNA uridine(34) hydroxylase (305 aa).

One can recognise a Rhodanese domain in the interval 126–220 (CDPEVTVIDT…YLEEVPAQES (95 aa)). Catalysis depends on Cys180, which acts as the Cysteine persulfide intermediate.

The protein belongs to the TrhO family.

The enzyme catalyses uridine(34) in tRNA + AH2 + O2 = 5-hydroxyuridine(34) in tRNA + A + H2O. In terms of biological role, catalyzes oxygen-dependent 5-hydroxyuridine (ho5U) modification at position 34 in tRNAs. This Nostoc punctiforme (strain ATCC 29133 / PCC 73102) protein is tRNA uridine(34) hydroxylase.